We begin with the raw amino-acid sequence, 476 residues long: Fatty acid hydroperoxide lyase, chloroplastic (476 aa).

A helical membrane pass occupies residues 280–300 (LLFILGFNAFGGFSIFLPTLL). Cys438 contributes to the heme binding site.

It belongs to the cytochrome P450 family. The cofactor is heme. As to expression, highly expressed in developing flowers and in young leaves. Detected in stems and immature green fruits, but not in mature green and red fruits.

It is found in the plastid. The protein resides in the chloroplast outer membrane. Its activity is regulated as follows. Reversibly inhibited by nordihydroguaiaretic acid (NDGA) and irreversibly by salicylic acid. In terms of biological role, cytochrome P450 of the CYP74B subfamily involved in the biosynthesis of traumatin and C6 aldehydes. Metabolizes 13- but not 9-hydroperoxides of linoleic and linolenic acids. Can use 15S-hydroperoxy-11(Z),13(E),17(Z)-eicosatrienoic acid (15-HPET) and 13S-hydroperoxy-9(Z),11(E),15(Z)-octadecatrienoic acid (13-HPOT) as substrates, but only 5% activity with 13S-hydroperoxy-9(Z),11(E)-octadecadienoic acid (13-HPOD). Produces n-hexanal and 12-oxo-9(Z)-dodecanoic acid from 13-HPOD. The polypeptide is Fatty acid hydroperoxide lyase, chloroplastic (Solanum lycopersicum (Tomato)).